The sequence spans 163 residues: NADH-quinone oxidoreductase subunit I (163 aa).

2 4Fe-4S ferredoxin-type domains span residues 53-83 and 94-123; these read LRRY…IEAG and VRYD…EGPN. [4Fe-4S] cluster is bound by residues cysteine 63, cysteine 66, cysteine 69, cysteine 73, cysteine 103, cysteine 106, cysteine 109, and cysteine 113.

It belongs to the complex I 23 kDa subunit family. In terms of assembly, NDH-1 is composed of 14 different subunits. Subunits NuoA, H, J, K, L, M, N constitute the membrane sector of the complex. Requires [4Fe-4S] cluster as cofactor.

It localises to the cell inner membrane. The enzyme catalyses a quinone + NADH + 5 H(+)(in) = a quinol + NAD(+) + 4 H(+)(out). In terms of biological role, NDH-1 shuttles electrons from NADH, via FMN and iron-sulfur (Fe-S) centers, to quinones in the respiratory chain. The immediate electron acceptor for the enzyme in this species is believed to be ubiquinone. Couples the redox reaction to proton translocation (for every two electrons transferred, four hydrogen ions are translocated across the cytoplasmic membrane), and thus conserves the redox energy in a proton gradient. This chain is NADH-quinone oxidoreductase subunit I, found in Rhizobium johnstonii (strain DSM 114642 / LMG 32736 / 3841) (Rhizobium leguminosarum bv. viciae).